The primary structure comprises 367 residues: Gibberellin 20 oxidase 3 (367 aa).

The 107-residue stretch at 198–304 (DGDPVMRLNH…RRSLTFFLNP (107 aa)) folds into the Fe2OG dioxygenase domain. Tyrosine 208 is a 2-oxoglutarate binding site. Fe cation is bound by residues histidine 223, aspartate 225, and histidine 285. 2-oxoglutarate-binding residues include arginine 295 and serine 297.

The protein belongs to the iron/ascorbate-dependent oxidoreductase family. The cofactor is Fe(2+). Requires L-ascorbate as cofactor.

It catalyses the reaction gibberellin A12 + 2 2-oxoglutarate + 3 O2 + H(+) = gibberellin A9 + 2 succinate + 3 CO2 + 2 H2O. It carries out the reaction gibberellin A53 + 2 2-oxoglutarate + 3 O2 + H(+) = gibberellin A20 + 2 succinate + 3 CO2 + 2 H2O. Key oxidase enzyme in the biosynthesis of gibberellin. Catalyzes the formation of bioactive gibberellins (GAs) via a three-step oxidation at C-20 of the GA skeleton. Controls the elongation of the vegetative shoot and plant height by the regulation of active gibberellin levels. The polypeptide is Gibberellin 20 oxidase 3 (Oryza sativa subsp. japonica (Rice)).